Here is a 372-residue protein sequence, read N- to C-terminus: Lysophosphatidic acid receptor 5 (372 aa).

Residues 1–26 (MLANSSSTNSSVLPCPDYRPTHRLHL) lie on the Extracellular side of the membrane. N-linked (GlcNAc...) asparagine glycosylation is found at Asn4 and Asn9. The helical transmembrane segment at 27–47 (VVYSLVLAAGLPLNALALWVF) threads the bilayer. The Cytoplasmic segment spans residues 48-55 (LRALRVHS). Residues 56 to 76 (VVSVYMCNLAASDLLFTLSLP) form a helical membrane-spanning segment. The Extracellular portion of the chain corresponds to 77–96 (VRLSYYALHHWPFPDLLCQT). An intrachain disulfide couples Cys94 to Cys175. A helical transmembrane segment spans residues 97 to 117 (TGAIFQMNMYGSCIFLMLINV). The Cytoplasmic segment spans residues 118-136 (DRYAAIVHPLRLRHLRRPR). Residues 137–157 (VARLLCLGVWALILVFAVPAA) form a helical membrane-spanning segment. The Extracellular segment spans residues 158 to 187 (RVHRPSRCRYRDLEVRLCFESFSDELWKGR). A helical transmembrane segment spans residues 188–208 (LLPLVLLAEALGFLLPLAAVV). At 209 to 239 (YSSGRVFWTLARPDATQSQRRRKTVRLLLAN) the chain is on the cytoplasmic side. Residues 240–260 (LVIFLLCFVPYNSTLAVYGLL) form a helical membrane-spanning segment. The Extracellular segment spans residues 261–276 (RSKLVAASVPARDRVR). The helical transmembrane segment at 277–297 (GVLMVMVLLAGANCVLDPLVY) threads the bilayer. Residues 298–372 (YFSAEGFRNT…FTQCPQDSAL (75 aa)) lie on the Cytoplasmic side of the membrane. Residues 312–372 (GTPHRARTSA…FTQCPQDSAL (61 aa)) form a disordered region. Polar residues-rich tracts occupy residues 332 to 341 (SERSAVTTDA) and 357 to 372 (SHSL…DSAL).

The protein belongs to the G-protein coupled receptor 1 family. As to expression, not expressed in frontal cortex, basal forebrain, caudate putamen, thalamus, or hippocampus.

The protein resides in the cell membrane. Its function is as follows. Receptor for lysophosphatidic acid (LPA), a mediator of diverse cellular activities. This Homo sapiens (Human) protein is Lysophosphatidic acid receptor 5 (LPAR5).